A 295-amino-acid chain; its full sequence is F-box only protein 6 (295 aa).

The region spanning 1–48 is the F-box domain; sequence MVHINELPENILLELFIHIPAPQLLRNCRLVCRLWRDLIDVVSLWKRK. Residues 69 to 250 enclose the FBA domain; it reads FYILCSLQRN…VTNSSIIISH (182 aa). Residues serine 249 and serine 276 each carry the phosphoserine modification. Position 280 is a phosphothreonine (threonine 280).

As to quaternary structure, interacts with CHEK1 and CUL1. Part of a SCF (SKP1-cullin-F-box) protein ligase complex. Interacts with VCP. Present in liver and kidney (at protein level). Widely expressed.

It localises to the cytoplasm. The protein operates within protein modification; protein ubiquitination. Substrate-recognition component of some SCF (SKP1-CUL1-F-box protein)-type E3 ubiquitin ligase complexes. Involved in DNA damage response by specifically recognizing activated CHEK1 (phosphorylated on 'Ser-345'), promoting its ubiquitination and degradation. Ubiquitination of CHEK1 is required to ensure that activated CHEK1 does not accumulate as cells progress through S phase, or when replication forks encounter transient impediments during normal DNA replication. Involved in endoplasmic reticulum-associated degradation pathway (ERAD) for misfolded lumenal proteins by recognizing and binding sugar chains on unfolded glycoproteins that are retrotranslocated into the cytosol and promoting their ubiquitination and subsequent degradation. Able to recognize and bind denatured glycoproteins, which are modified with not only high-mannose but also complex-type oligosaccharides. Also recognizes sulfated glycans. In Mus musculus (Mouse), this protein is F-box only protein 6 (Fbxo6).